Consider the following 115-residue polypeptide: Tyrosine-protein phosphatase 22 (115 aa).

Residues 1–115 (WLMIVEQKCR…ETGGDAPMVV (115 aa)) form the Tyrosine-protein phosphatase domain. Asp83 contacts substrate.

This sequence belongs to the protein-tyrosine phosphatase family.

It catalyses the reaction O-phospho-L-tyrosyl-[protein] + H2O = L-tyrosyl-[protein] + phosphate. This chain is Tyrosine-protein phosphatase 22 (STY-22), found in Styela plicata (Wrinkled sea squirt).